A 228-amino-acid polypeptide reads, in one-letter code: MAEHATGVYGHPYPRVDQYGNPVPPVDQYGNPVPDEPAPRDTAAGYVAPPDPAVSTGDYGLAGAEAPHPHESAVMSGAAAAAVAPGGEAYTRDGGGVVPPAGEKTFAYEGTVSAAGVTGASGQLQPTTREEGHTTLGETLRRSGKSSSSSSSSSEDDGQGGRRKKKSIKEKIKEKLPGSHKQEEQKQAGHTAPAAGTGTGTGTHAAGKHEKKGIVEKIKEKLPGHGHH.

Disordered regions lie at residues 1–68 (MAEH…EAPH) and 115–228 (AGVT…HGHH). Composition is skewed to basic and acidic residues over residues 169-187 (KEKIKEKLPGSHKQEEQKQ) and 212-228 (KGIVEKIKEKLPGHGHH).

Belongs to the plant dehydrin family.

This is Dehydrin Rab25 (RAB25) from Oryza sativa subsp. japonica (Rice).